We begin with the raw amino-acid sequence, 556 residues long: TNF receptor-associated factor 6-B (556 aa).

An RING-type; degenerate zinc finger spans residues 72 to 111; sequence CPICLMALREAVQTPCGHRFCKACIVKSLRDAGHKCPVDN. TRAF-type zinc fingers lie at residues 152-204 and 205-261; these read RHLG…EDMS and GHEL…NDLA. Positions 318–356 form a coiled coil; that stretch reads SHQDCSQETRNLRETIEQLEGRLVRQDHQIRELIAKMET. Residues 384–533 form the MATH domain; it reads NGVFIWKIKG…NDTLFVRCAV (150 aa).

Belongs to the TNF receptor-associated factor family. A subfamily. As to quaternary structure, homotrimer. Homooligomer.

It is found in the cytoplasm. It localises to the cell cortex. Its subcellular location is the nucleus. The protein localises to the lipid droplet. The enzyme catalyses S-ubiquitinyl-[E2 ubiquitin-conjugating enzyme]-L-cysteine + [acceptor protein]-L-lysine = [E2 ubiquitin-conjugating enzyme]-L-cysteine + N(6)-ubiquitinyl-[acceptor protein]-L-lysine.. Its pathway is protein modification; protein ubiquitination. Functionally, E3 ubiquitin ligase that, together with UBE2N and UBE2V1, mediates the synthesis of 'Lys-63'-linked-polyubiquitin chains conjugated to proteins, such as IKBKG, IRAK1, AKT1 and AKT2. Also mediates ubiquitination of free/unanchored polyubiquitin chain that leads to MAP3K7 activation. The chain is TNF receptor-associated factor 6-B (traf6-b) from Xenopus laevis (African clawed frog).